Consider the following 214-residue polypeptide: Riboflavin kinase (214 aa).

The interval 1-26 (MRPDGPRDPVAGPDSGPEPPYPVRLS) is disordered. The Mg(2+) site is built by Thr-44 and Asn-46. The active-site Nucleophile is Glu-116.

Belongs to the flavokinase family. Zn(2+) serves as cofactor. Requires Mg(2+) as cofactor.

It carries out the reaction riboflavin + ATP = FMN + ADP + H(+). Its pathway is cofactor biosynthesis; FMN biosynthesis; FMN from riboflavin (ATP route): step 1/1. Catalyzes the phosphorylation of riboflavin (vitamin B2) to form flavin mononucleotide (FMN) coenzyme. In Aspergillus fumigatus (strain ATCC MYA-4609 / CBS 101355 / FGSC A1100 / Af293) (Neosartorya fumigata), this protein is Riboflavin kinase (fmn1).